A 174-amino-acid polypeptide reads, in one-letter code: Cytochrome c-550-like protein (174 aa).

The first 37 residues, methionine 1–glycine 37, serve as a signal peptide directing secretion. Cysteine 82, cysteine 85, histidine 86, and cysteine 136 together coordinate heme c.

Belongs to the cytochrome c family. PsbV subfamily. Heme c serves as cofactor.

The protein resides in the cellular thylakoid membrane. In terms of biological role, possible low-potential cytochrome c. The protein is Cytochrome c-550-like protein (psbV2) of Synechococcus sp. (strain JA-3-3Ab) (Cyanobacteria bacterium Yellowstone A-Prime).